The sequence spans 141 residues: MATMQISAKGLAPLRPRVSSRRVVKPVASGGGKTDITKVGLNSIEDPVVKQNLMGKSRFMNKKDWKDASGRKGKGYGVYRYEDKYGANVDGYSPIYTPDLWTESGDSYTLGTKGLIAWAGLVLVLLAVGVNLIISTSQLGA.

Residues 1 to 27 constitute a chloroplast transit peptide; the sequence is MATMQISAKGLAPLRPRVSSRRVVKPV. Thr-34 and Thr-37 each carry phosphothreonine. Ser-43 carries the phosphoserine modification. The chain crosses the membrane as a helical span at residues 114–134; the sequence is GLIAWAGLVLVLLAVGVNLII.

The protein belongs to the psbR family.

It localises to the plastid. The protein resides in the chloroplast thylakoid membrane. Its function is as follows. Associated with the oxygen-evolving complex of photosystem II (PSII). Is required for the stable binding of LHCSR3 to PSII-LHCII supercomplexes and is essential for efficient energy-dependent quenching and the integrity of the PSII-LHCII-LHCSR3 supercomplex under continuous high light. The sequence is that of Photosystem II protein PSBR, chloroplastic from Chlamydomonas reinhardtii (Chlamydomonas smithii).